Here is a 239-residue protein sequence, read N- to C-terminus: Purine nucleoside phosphorylase DeoD-type 1 (239 aa).

Histidine 5 serves as a coordination point for a purine D-ribonucleoside. Phosphate is bound by residues glycine 21, arginine 25, arginine 44, and 88–91 (RVGS). Residues 180-182 (EME) and 204-205 (SD) each bind a purine D-ribonucleoside. Aspartate 205 serves as the catalytic Proton donor.

This sequence belongs to the PNP/UDP phosphorylase family. Homohexamer; trimer of homodimers.

It carries out the reaction a purine D-ribonucleoside + phosphate = a purine nucleobase + alpha-D-ribose 1-phosphate. The catalysed reaction is a purine 2'-deoxy-D-ribonucleoside + phosphate = a purine nucleobase + 2-deoxy-alpha-D-ribose 1-phosphate. Its function is as follows. Catalyzes the reversible phosphorolytic breakdown of the N-glycosidic bond in the beta-(deoxy)ribonucleoside molecules, with the formation of the corresponding free purine bases and pentose-1-phosphate. The chain is Purine nucleoside phosphorylase DeoD-type 1 from Vibrio parahaemolyticus serotype O3:K6 (strain RIMD 2210633).